Consider the following 182-residue polypeptide: UPF0316 protein BCG9842_B1857 (182 aa).

A run of 3 helical transmembrane segments spans residues 6-26 (LIFVLQIIYVPILTIRTILLV), 32-52 (SAAGVGLLEGAIYIVSLGIVF), and 58-78 (WMNIVAYVIGFSTGLLLGGYI).

The protein belongs to the UPF0316 family.

The protein resides in the cell membrane. The sequence is that of UPF0316 protein BCG9842_B1857 from Bacillus cereus (strain G9842).